The following is a 528-amino-acid chain: Capsid scaffolding protein (528 aa).

Active-site charge relay system residues include histidine 46, serine 116, and histidine 135. Residues histidine 270–glutamine 288 are interaction with pAP. The tract at residues lysine 394–methionine 431 is disordered. The Nuclear localization signal signature appears at lysine 416–arginine 422. Residues serine 508–serine 528 are interaction with major capsid protein.

It belongs to the herpesviridae capsid scaffolding protein family. Homomultimer. Interacts with major capsid protein. In terms of assembly, exists in a monomer-dimer equilibrium with the dimer being the active species. Capsid scaffolding protein is cleaved by assemblin after formation of the spherical procapsid. As a result, the capsid obtains its mature, icosahedral shape. Cleavages occur at two or more sites: release (R-site) and maturation (M-site).

The protein localises to the host cytoplasm. It is found in the host nucleus. The enzyme catalyses Cleaves -Ala-|-Ser- and -Ala-|-Ala- bonds in the scaffold protein.. Acts as a scaffold protein by binding major capsid protein in the cytoplasm, inducing the nuclear localization of both proteins. Multimerizes in the nucleus such as major capsid protein forms the icosahedral T=16 capsid. Autocatalytic cleavage releases the assembly protein, and subsequently abolishes interaction with major capsid protein. Cleavages products are evicted from the capsid before or during DNA packaging. In terms of biological role, protease that plays an essential role in virion assembly within the nucleus. Catalyzes the cleavage of the assembly protein after formation of the spherical procapsid. By that cleavage, the capsid matures and gains its icosahedral shape. The cleavage sites seem to include -Ala-Ser-, -Ala-Ala-, as well as Ala-Thr bonds. Assemblin and cleavages products are evicted from the capsid before or during DNA packaging. Its function is as follows. Plays a major role in capsid assembly. Acts as a scaffold protein by binding major capsid protein. Multimerizes in the nucleus such as major capsid protein forms the icosahedral T=16 capsid. Cleaved by assemblin after capsid completion. The cleavages products are evicted from the capsid before or during DNA packaging. This Homo sapiens (Human) protein is Capsid scaffolding protein (U53).